The chain runs to 329 residues: Sulfate-binding protein (329 aa).

An N-terminal signal peptide occupies residues Met-1–Ala-19.

It belongs to the prokaryotic sulfate-binding protein family.

The protein localises to the periplasm. Functionally, this protein specifically binds sulfate and is involved in its transmembrane transport. The polypeptide is Sulfate-binding protein (sbp) (Salmonella typhimurium (strain LT2 / SGSC1412 / ATCC 700720)).